The chain runs to 476 residues: Inner membrane transporter YcaM (476 aa).

Over 1 to 9 (MAGNVQEKQ) the chain is Cytoplasmic. The chain crosses the membrane as a helical span at residues 10 to 30 (LRWYNIALMSFITVWGFGNVV). The Periplasmic portion of the chain corresponds to 31–38 (NNYANQGL). A helical membrane pass occupies residues 39–59 (VVVFSWVFIFALYFTPYALIV). Topologically, residues 60–80 (GQLGSTFKDGKGGVSTWIKHT) are cytoplasmic. Residues 81–101 (MGPGLAYLAAWTYWVVHIPYL) traverse the membrane as a helical segment. Residues 102-125 (AQKPQAILIALGWAMKGDGSLIKE) lie on the Periplasmic side of the membrane. A helical transmembrane segment spans residues 126–146 (YSVVALQGLTLVLFIFFMWVA). Residues 147–154 (SRGMKSLK) lie on the Cytoplasmic side of the membrane. Residues 155–175 (IVGSVAGIAMFVMSLLYVAMA) form a helical membrane-spanning segment. Residues 176–195 (VTAPAITEVHIATTNITWET) lie on the Periplasmic side of the membrane. Residues 196–216 (FIPHIDFTYITTISMLVFAVG) traverse the membrane as a helical segment. Over 217–240 (GAEKISPYVNQTRNPGKEFPKGML) the chain is Cytoplasmic. Residues 241-261 (CLAVMVAVCAILGSLAMGMMF) form a helical membrane-spanning segment. Residues 262-291 (DSRNIPDDLMTNGQYYAFQKLGEYYNMGNT) are Periplasmic-facing. The chain crosses the membrane as a helical span at residues 292–312 (LMVIYAIANTLGQVAALVFSI). The Cytoplasmic segment spans residues 313–343 (DAPLKVLLGDADSKYIPASLCRTNASGTPVN). Residues 344–364 (GYFLTLVLVAILIMLPTLGIG) form a helical membrane-spanning segment. The Periplasmic portion of the chain corresponds to 365–375 (DMNNLYKWLLN). A helical transmembrane segment spans residues 376–396 (LNSVVMPLRYLWVFVAFIAVV). Residues 397 to 414 (RLAQKYKPEYVFIRNKPL) are Cytoplasmic-facing. A helical transmembrane segment spans residues 415 to 435 (AMTVGIWCFAFTAFACLTGIF). Residues 436–448 (PKMEAFTAEWTFQ) lie on the Periplasmic side of the membrane. Residues 449–469 (LALNVATPFVLVGLGLIFPLL) traverse the membrane as a helical segment. Residues 470-476 (ARKANSK) lie on the Cytoplasmic side of the membrane.

Belongs to the amino acid-polyamine-organocation (APC) superfamily.

The protein localises to the cell inner membrane. The protein is Inner membrane transporter YcaM (ycaM) of Escherichia coli (strain K12).